Reading from the N-terminus, the 493-residue chain is Neuronal acetylcholine receptor subunit alpha-6 (493 aa).

Residues 1–30 (MLNGWGRGDLRSGLCLWICGFLAFFKGSRG) form the signal peptide. Over 31–240 (CVSEEQLFHT…TYSFYIRRLP (210 aa)) the chain is Extracellular. N-linked (GlcNAc...) asparagine glycans are attached at residues N54 and N171. 2 cysteine pairs are disulfide-bonded: C158–C172 and C222–C223. 3 helical membrane passes run 241–265 (MFYT…FYLP), 272–290 (VTLC…LVIT), and 306–327 (YLLF…VLNI). Residues 328 to 464 (HYRTPATHTM…WKYMAMVVDR (137 aa)) are Cytoplasmic-facing. S401 is modified (phosphoserine). The helical transmembrane segment at 465-484 (VFLWVFIIVCVFGTVGLFLQ) threads the bilayer.

It belongs to the ligand-gated ion channel (TC 1.A.9) family. Acetylcholine receptor (TC 1.A.9.1) subfamily. Alpha-6/CHRNA6 sub-subfamily. In terms of assembly, neuronal AChR is composed of two different types of subunits: alpha and non-alpha (beta). CHRNA6/alpha-6 subunit can be combined to CHRNB2/beta-2 and CHRNA4/alpha-4 to give rise to functional receptors. Interacts with LYPD6. Predominantly expressed in only a few brain areas, including dopaminergic neurons, norepirephrine neurons and cells of the visual system.

Its subcellular location is the synaptic cell membrane. It carries out the reaction Ca(2+)(in) = Ca(2+)(out). The catalysed reaction is K(+)(in) = K(+)(out). It catalyses the reaction Na(+)(in) = Na(+)(out). Activated by a myriad of ligands such as acetylcholine, cytisine and nicotine. CHRNA6 nAChR activity is inhibited by the antagonists alpha-conotoxin MII and PIA, a small disulfide-constrained peptides from cone snails. Component of neuronal acetylcholine receptors (nAChRs) that function as pentameric, ligand-gated cation channels with high calcium permeability among other activities. nAChRs are excitatory neurotrasnmitter receptors formed by a collection of nAChR subunits known to mediate synaptic transmission in the nervous system and the neuromuscular junction. Each nAchR subunit confers differential attributes to channel properties, including activation, deactivation and desensitization kinetics, pH sensitivity, cation permeability, and binding to allosteric modulators. CHRNA6 forms pentameric channels with CHRNB2 and CHRNA4 that exhibit high sensitivity to ACh and nicotine and are predominantly expressed in only a few brain areas, including dopaminergic neurons, norepirephrine neurons and cells of the visual system. nAChrs containing CHRNA6 subunits mediate endogenous cholinergic modulation of dopamine and gamma-aminobutyric acid (GABA) release in response to nicotine at nerve terminals. This chain is Neuronal acetylcholine receptor subunit alpha-6 (Chrna6), found in Rattus norvegicus (Rat).